The primary structure comprises 384 residues: Alanine racemase (384 aa).

Lys39 (proton acceptor; specific for D-alanine) is an active-site residue. Lys39 bears the N6-(pyridoxal phosphate)lysine mark. Arg136 contacts substrate. Residue Tyr265 is the Proton acceptor; specific for L-alanine of the active site. Met312 lines the substrate pocket.

It belongs to the alanine racemase family. Pyridoxal 5'-phosphate serves as cofactor.

It carries out the reaction L-alanine = D-alanine. Its pathway is amino-acid biosynthesis; D-alanine biosynthesis; D-alanine from L-alanine: step 1/1. In terms of biological role, catalyzes the interconversion of L-alanine and D-alanine. May also act on other amino acids. In Geobacillus kaustophilus (strain HTA426), this protein is Alanine racemase (alr).